The primary structure comprises 272 residues: 3-methyl-2-oxobutanoate hydroxymethyltransferase (272 aa).

2 residues coordinate Mg(2+): D42 and D86. 3-methyl-2-oxobutanoate contacts are provided by residues 42-43 (DS), D86, and K116. A Mg(2+)-binding site is contributed by E118. The active-site Proton acceptor is the E185.

Belongs to the PanB family. In terms of assembly, homodecamer; pentamer of dimers. Mg(2+) is required as a cofactor.

The protein localises to the cytoplasm. The catalysed reaction is 3-methyl-2-oxobutanoate + (6R)-5,10-methylene-5,6,7,8-tetrahydrofolate + H2O = 2-dehydropantoate + (6S)-5,6,7,8-tetrahydrofolate. It functions in the pathway cofactor biosynthesis; (R)-pantothenate biosynthesis; (R)-pantoate from 3-methyl-2-oxobutanoate: step 1/2. Its function is as follows. Catalyzes the reversible reaction in which hydroxymethyl group from 5,10-methylenetetrahydrofolate is transferred onto alpha-ketoisovalerate to form ketopantoate. The polypeptide is 3-methyl-2-oxobutanoate hydroxymethyltransferase (Prochlorococcus marinus (strain MIT 9303)).